The following is a 1343-amino-acid chain: uncharacterized protein (1343 aa).

A helical membrane pass occupies residues 432–449 (LYVYFVTTKTGVVAFSLL).

This sequence belongs to the IIV-6 295L family.

It localises to the membrane. This is an uncharacterized protein from Acheta domesticus (House cricket).